We begin with the raw amino-acid sequence, 110 residues long: U-scoloptoxin(16)-Er6a (110 aa).

The N-terminal stretch at 1-26 is a signal peptide; sequence MTSTRKLSVSCLIVFMVSSLIAVSSG.

The protein belongs to the scoloptoxin-16 family. In terms of processing, contains 4 disulfide bonds. As to expression, expressed by the venom gland.

The protein resides in the secreted. The protein is U-scoloptoxin(16)-Er6a of Ethmostigmus rubripes (Giant centipede).